A 426-amino-acid chain; its full sequence is D-amino acid dehydrogenase (426 aa).

3–17 (VVVLGAGVIGVTTAW) is an FAD binding site.

Belongs to the DadA oxidoreductase family. FAD serves as cofactor.

The catalysed reaction is a D-alpha-amino acid + A + H2O = a 2-oxocarboxylate + AH2 + NH4(+). Its pathway is amino-acid degradation; D-alanine degradation; NH(3) and pyruvate from D-alanine: step 1/1. In terms of biological role, oxidative deamination of D-amino acids. In Phenylobacterium zucineum (strain HLK1), this protein is D-amino acid dehydrogenase.